A 229-amino-acid polypeptide reads, in one-letter code: uncharacterized protein (229 aa).

Transmembrane regions (helical) follow at residues Met-1–Phe-21, Ile-32–His-52, Tyr-58–Leu-78, Thr-100–Leu-120, Ile-139–Trp-159, Leu-178–Leu-198, and Leu-206–Gly-226.

The protein localises to the cell membrane. This is an uncharacterized protein from Bacillus subtilis (strain 168).